The following is a 256-amino-acid chain: MLRIADKTFDSHLFTGTGKFASSQLMVEAIRASGSQLVTLAMKRVDLRQHNDAILAPLIEAGVTLLPNTSGAKTAEEAIFAAQLAREALGTHWLKLEIHPDARWLLPDPIETLKAAEALVKQGFVVLPYCGADPVLCKRLEEVGCAAVMPLGAPIGSNQGLETKAMLEIIIQQATVPVVVDAGIGVPSHATQALEMGADAVLVNTAIAVADNPVMMATAFRLAVEAGLLARQAVPGNRSTYASATSPLTGFLEALA.

K95 acts as the Schiff-base intermediate with DXP in catalysis. 1-deoxy-D-xylulose 5-phosphate-binding positions include G156, 182 to 183, and 204 to 205; these read AG and NT.

The protein belongs to the ThiG family. Homotetramer. Forms heterodimers with either ThiH or ThiS.

Its subcellular location is the cytoplasm. It carries out the reaction [ThiS sulfur-carrier protein]-C-terminal-Gly-aminoethanethioate + 2-iminoacetate + 1-deoxy-D-xylulose 5-phosphate = [ThiS sulfur-carrier protein]-C-terminal Gly-Gly + 2-[(2R,5Z)-2-carboxy-4-methylthiazol-5(2H)-ylidene]ethyl phosphate + 2 H2O + H(+). It functions in the pathway cofactor biosynthesis; thiamine diphosphate biosynthesis. Catalyzes the rearrangement of 1-deoxy-D-xylulose 5-phosphate (DXP) to produce the thiazole phosphate moiety of thiamine. Sulfur is provided by the thiocarboxylate moiety of the carrier protein ThiS. In vitro, sulfur can be provided by H(2)S. The protein is Thiazole synthase of Salmonella paratyphi A (strain ATCC 9150 / SARB42).